The chain runs to 148 residues: Small ribosomal subunit protein uS15 (148 aa).

The disordered stretch occupies residues 1–23 (MRKSKEKGRSGSTRPPQLKKPEW).

It belongs to the universal ribosomal protein uS15 family. Part of the 30S ribosomal subunit.

In Thermofilum pendens (strain DSM 2475 / Hrk 5), this protein is Small ribosomal subunit protein uS15.